Here is an 816-residue protein sequence, read N- to C-terminus: Fibroblast growth factor receptor 1 (816 aa).

An N-terminal signal peptide occupies residues 1-23 (MLSWRHLVFWAMLVMATLSAARP). At 24 to 374 (APTLPEQVSP…VIMTSPLYLE (351 aa)) the chain is on the extracellular side. The region spanning 25 to 118 (PTLPEQVSPK…ETTFFAVNVS (94 aa)) is the Ig-like C2-type 1 domain. Cysteines 54 and 100 form a disulfide. N-linked (GlcNAc...) asparagine glycosylation is found at N76 and N116. A disordered region spans residues 118–152 (SDRIPSVEDDDDDDEKSSSEEKEAENSKPNPVAPF). Positions 133 to 143 (KSSSEEKEAEN) are enriched in basic and acidic residues. Ig-like C2-type domains are found at residues 156 to 244 (PEKM…YQLD) and 253 to 355 (PILQ…AWLT). C176 and C228 are joined by a disulfide. 5 N-linked (GlcNAc...) asparagine glycosylation sites follow: N238, N262, N294, N315, and N328. Residues C275 and C339 are joined by a disulfide bond. Residues 375–395 (IIIYCTGAFLISCMLVTVIIY) traverse the membrane as a helical segment. The Cytoplasmic segment spans residues 396–816 (KMKNTTKKTD…QHANGGLKKR (421 aa)). Y459 is modified (phosphotyrosine; by autocatalysis). Residues 474-763 (LILGKPLGEG…VAMTSNQEYL (290 aa)) form the Protein kinase domain. ATP-binding positions include 480 to 486 (LGEGCFG), K510, 558 to 560 (EYA), and N564. 2 positions are modified to phosphotyrosine; by autocatalysis: Y579 and Y581. The active-site Proton acceptor is D619. Positions 623 and 637 each coordinate ATP. Phosphotyrosine; by autocatalysis occurs at positions 649, 650, 726, and 762. Residues 776–816 (FPDTRSSTCSSGEDSVFSHDPLPDEPCLPKYQHANGGLKKR) form a disordered region. The segment covering 779-788 (TRSSTCSSGE) has biased composition (polar residues).

It belongs to the protein kinase superfamily. Tyr protein kinase family. Fibroblast growth factor receptor subfamily. As to quaternary structure, monomer. Homodimer after ligand binding. Post-translationally, autophosphorylated. Binding of FGF family members together with heparan sulfate proteoglycan or heparin promotes receptor dimerization and autophosphorylation on tyrosine residues. Autophosphorylation occurs in trans between the two FGFR molecules present in the dimer and proceeds in a highly ordered manner. Phosphotyrosine residues provide docking sites for interacting proteins and so are crucial for FGFR1 function and its regulation. In terms of processing, ubiquitinated. FGFR1 is rapidly ubiquitinated after autophosphorylation, leading to internalization and degradation. N-glycosylated in the endoplasmic reticulum. The N-glycan chains undergo further maturation to an Endo H-resistant form in the Golgi apparatus.

It localises to the cell membrane. The protein resides in the nucleus. Its subcellular location is the cytoplasm. It is found in the cytosol. The protein localises to the cytoplasmic vesicle. It carries out the reaction L-tyrosyl-[protein] + ATP = O-phospho-L-tyrosyl-[protein] + ADP + H(+). With respect to regulation, present in an inactive conformation in the absence of bound ligand. Ligand binding leads to dimerization and activation by sequential autophosphorylation on tyrosine residues. Its function is as follows. Tyrosine-protein kinase that acts as a cell-surface receptor for fibroblast growth factors and plays an essential role in the regulation of embryonic development, cell proliferation, differentiation and migration. Required for normal mesoderm patterning and normal skeletogenesis. Phosphorylates PLCG1, FRS2, GAB1 and SHB. Ligand binding leads to the activation of several signaling cascades. Activation of PLCG1 leads to the production of the cellular signaling molecules diacylglycerol and inositol-1,4,5-trisphosphate. Phosphorylation of FRS2 triggers recruitment of GRB2, GAB1, PIK3R1 and SOS1, and mediates activation of RAS, MAPK1/ERK2, MAPK3/ERK1 and the MAP kinase signaling pathway, as well as of the AKT1 signaling pathway. Promotes phosphorylation of SHC1, STAT1 and PTPN11/SHP2. In the nucleus, enhances RPS6KA1 and CREB1 activity and contributes to the regulation of transcription. FGFR1 signaling is down-regulated by ubiquitination, internalization and degradation. This chain is Fibroblast growth factor receptor 1 (FGFR1), found in Pleurodeles waltl (Iberian ribbed newt).